Reading from the N-terminus, the 49-residue chain is Zinc-containing ferredoxin (49 aa).

The tract at residues 1-36 (GIDPNYRTSRQVVGEHQGHKVYGPVDPPKVLGIHGT) is N-terminal extension. Positions 16 and 19 each coordinate Zn(2+). Residue Lys-29 is modified to N6-methyllysine. A Zn(2+)-binding site is contributed by His-34. The segment at 37–49 (IVXVDFDLCIADG) is ferredoxin. Cys-45 contributes to the [3Fe-4S] cluster binding site.

[3Fe-4S] cluster is required as a cofactor. Requires [4Fe-4S] cluster as cofactor. The cofactor is Zn(2+).

In terms of biological role, ferredoxins are iron-sulfur proteins that transfer electrons in a wide variety of metabolic reactions. The chain is Zinc-containing ferredoxin (zfx) from Acidianus infernus.